Consider the following 396-residue polypeptide: MSIASNSTVIILGSTGSIGTQGLDVIARHPERFTVTGLAAGGAHIELLAQQAAQFHVSEVAVFDETKIPALQAALAQAGAQGVRVTGGPDSVIAMAGSGANVVLNGITGSIGLEPSIAALKAGSQLALANKESVVAGGHLLFSAQVRENQINPVDSEHSAIWQSLRSGTHAEVAKLVVTASGGPFRGWKRADMENITPEQALHHPTWNMGPVVTINSSTLMNKGLEVIEASRLFDVPPERIDVTVHPQSIVHSMVEFVDGATICQASPPDMRLPIALGLSAPDRMANVAAACDWTKAATWTFEPLDDEAFPAVQLARHCLAASEKHTAVLNAANEQAVHAFLEHRLPYLGIVDTVKAVLDQMDAELRGNPLFTDVEEMNQLELEARRRADDLINKQ.

Thr15, Gly16, Ser17, Ile18, Gly41, and Asn130 together coordinate NADPH. Residue Lys131 coordinates 1-deoxy-D-xylulose 5-phosphate. Position 132 (Glu132) interacts with NADPH. A Mn(2+)-binding site is contributed by Asp155. 4 residues coordinate 1-deoxy-D-xylulose 5-phosphate: Ser156, Glu157, Ser181, and His204. Glu157 provides a ligand contact to Mn(2+). Gly210 contacts NADPH. The 1-deoxy-D-xylulose 5-phosphate site is built by Ser217, Asn222, Lys223, and Glu226. Residue Glu226 coordinates Mn(2+).

It belongs to the DXR family. It depends on Mg(2+) as a cofactor. Mn(2+) serves as cofactor.

The enzyme catalyses 2-C-methyl-D-erythritol 4-phosphate + NADP(+) = 1-deoxy-D-xylulose 5-phosphate + NADPH + H(+). It functions in the pathway isoprenoid biosynthesis; isopentenyl diphosphate biosynthesis via DXP pathway; isopentenyl diphosphate from 1-deoxy-D-xylulose 5-phosphate: step 1/6. Functionally, catalyzes the NADPH-dependent rearrangement and reduction of 1-deoxy-D-xylulose-5-phosphate (DXP) to 2-C-methyl-D-erythritol 4-phosphate (MEP). This is 1-deoxy-D-xylulose 5-phosphate reductoisomerase from Bifidobacterium longum subsp. infantis (strain ATCC 15697 / DSM 20088 / JCM 1222 / NCTC 11817 / S12).